Reading from the N-terminus, the 489-residue chain is Putative BTB/POZ domain-containing protein R773 (489 aa).

In terms of domain architecture, BTB spans 3–73; it reads SNIELVITDE…GNTSYKFQDK (71 aa).

It belongs to the mimivirus BTB/WD family.

This Acanthamoeba polyphaga (Amoeba) protein is Putative BTB/POZ domain-containing protein R773.